A 422-amino-acid chain; its full sequence is Probable alpha-1,6-mannosyltransferase MNN11 (422 aa).

Residues 1–31 are Cytoplasmic-facing; the sequence is MAIKPRTKGKTYSSRSVGSQWFNRLGFKQNK. The helical; Signal-anchor for type II membrane protein transmembrane segment at 32–52 threads the bilayer; that stretch reads YGTCKFLSIITAFVFILYFFS. Topologically, residues 53–422 are lumenal; that stretch reads NRFYPISRSA…GHMYQKIKKS (370 aa).

This sequence belongs to the glycosyltransferase 34 family. In terms of assembly, component of the M-Pol II complex composed of ANP1, MNN9, MNN10, MNN11 and HOC1.

The protein resides in the golgi apparatus. Its subcellular location is the cis-Golgi network membrane. In terms of biological role, required for synthesis of full-length mannan chains. The M-Pol II complex possesses alpha-1,6-mannosyltransferase activity and is probably involved in the elongation of the mannan backbone of N-linked glycans on cell wall and periplasmic proteins. In Saccharomyces cerevisiae (strain ATCC 204508 / S288c) (Baker's yeast), this protein is Probable alpha-1,6-mannosyltransferase MNN11 (MNN11).